The following is a 409-amino-acid chain: tRNA-specific 2-thiouridylase MnmA (409 aa).

ATP contacts are provided by residues 40 to 47 and Leu66; that span reads GLSGGVDS. Cys127 serves as the catalytic Nucleophile. A disulfide bond links Cys127 and Cys237. Gly152 contributes to the ATP binding site. The disordered stretch occupies residues 156 to 179; the sequence is RIRHREDPEPQQALPGDSSGRHQL. Residues 187–189 are interaction with tRNA; sequence KDQ. Cys237 serves as the catalytic Cysteine persulfide intermediate. Residues 342-343 are interaction with tRNA; it reads RY.

The protein belongs to the MnmA/TRMU family.

Its subcellular location is the cytoplasm. It carries out the reaction S-sulfanyl-L-cysteinyl-[protein] + uridine(34) in tRNA + AH2 + ATP = 2-thiouridine(34) in tRNA + L-cysteinyl-[protein] + A + AMP + diphosphate + H(+). Its function is as follows. Catalyzes the 2-thiolation of uridine at the wobble position (U34) of tRNA, leading to the formation of s(2)U34. The protein is tRNA-specific 2-thiouridylase MnmA of Prochlorococcus marinus (strain MIT 9303).